The following is a 471-amino-acid chain: MLAHEIRARVARGEVSPLEVAQAYLKRVQELDPGLGAFLSLNERLLEEAEAVDPGLPLAGLVVAVKDNIATRGLRTTAGSRLLENFVPPYEATAVARLKALGALVLGKTNLDEFGMGSSTEHSAFFPTKNPFDPDRVPGGSSGGSAAALAADLAPLALGSDTGGSVRQPAAFCGVYGLKPTYGRVSRFGLIAYASSLDQIGPMARSVRDLALLMDAVAGPDPLDATSLDLPPRFQEALEGPLPPLRLGVVREALAGNSPGVERALEEALKVFRELGLSVREVSWPSLPQALAAYYILAPAEASSNLARYDGTLYGRRAEGEEVEGMMEATRALFGLEVKRRVLVGTFVLSSGYYEAYYGRAQAFRRRLKAEAQALFREVDLLLLPTTPHPAFPFGARRDPLAMYREDLYTVGANLTGLPALSFPAGFEGHLPVGLQLLAPWGEDERLLRAALAFEEATARAHLKAPLGEAL.

Catalysis depends on charge relay system residues Lys-66 and Ser-141. Ser-165 functions as the Acyl-ester intermediate in the catalytic mechanism.

It belongs to the amidase family. GatA subfamily. In terms of assembly, heterotrimer of A, B and C subunits.

The catalysed reaction is L-glutamyl-tRNA(Gln) + L-glutamine + ATP + H2O = L-glutaminyl-tRNA(Gln) + L-glutamate + ADP + phosphate + H(+). In terms of biological role, allows the formation of correctly charged Gln-tRNA(Gln) through the transamidation of misacylated Glu-tRNA(Gln) in organisms which lack glutaminyl-tRNA synthetase. The reaction takes place in the presence of glutamine and ATP through an activated gamma-phospho-Glu-tRNA(Gln). In Thermus thermophilus (strain ATCC BAA-163 / DSM 7039 / HB27), this protein is Glutamyl-tRNA(Gln) amidotransferase subunit A.